A 24-amino-acid chain; its full sequence is Antimicrobial peptide PGQ (24 aa).

Belongs to the gastrin/cholecystokinin family. Magainin subfamily. Is synthesized in the stomach and stored in a novel granular multinucleated cell in the gastric mucosa. It is stored as active, processed peptides in large granules within the granular gland secretions of the skin.

The protein resides in the secreted. In terms of biological role, antimicrobial peptide. This is Antimicrobial peptide PGQ (pgq) from Xenopus laevis (African clawed frog).